A 98-amino-acid polypeptide reads, in one-letter code: UPF0473 protein LAR_0522 (98 aa).

It belongs to the UPF0473 family.

The polypeptide is UPF0473 protein LAR_0522 (Limosilactobacillus reuteri subsp. reuteri (strain JCM 1112) (Lactobacillus reuteri)).